Here is a 366-residue protein sequence, read N- to C-terminus: 1-aminocyclopropane-1-carboxylate oxidase homolog 12 (366 aa).

The Fe2OG dioxygenase domain maps to 215–314; it reads KTLLMICHYY…RISVASFFSS (100 aa). Residues His239, Asp241, and His295 each coordinate Fe cation. Arg305 is a binding site for 2-oxoglutarate.

The protein belongs to the iron/ascorbate-dependent oxidoreductase family. Fe(2+) serves as cofactor.

This is 1-aminocyclopropane-1-carboxylate oxidase homolog 12 from Arabidopsis thaliana (Mouse-ear cress).